A 208-amino-acid polypeptide reads, in one-letter code: Cytochrome c biogenesis ATP-binding export protein CcmA (208 aa).

An ABC transporter domain is found at 3-206; it reads LSGKDLTAYR…LEKFLPPQEK (204 aa). 35-42 is an ATP binding site; sequence GPNGIGKS.

This sequence belongs to the ABC transporter superfamily. CcmA exporter (TC 3.A.1.107) family. In terms of assembly, the complex is composed of two ATP-binding proteins (CcmA) and two transmembrane proteins (CcmB).

The protein resides in the cell inner membrane. The catalysed reaction is heme b(in) + ATP + H2O = heme b(out) + ADP + phosphate + H(+). Part of the ABC transporter complex CcmAB involved in the biogenesis of c-type cytochromes; once thought to export heme, this seems not to be the case, but its exact role is uncertain. Responsible for energy coupling to the transport system. This is Cytochrome c biogenesis ATP-binding export protein CcmA from Bartonella henselae (strain ATCC 49882 / DSM 28221 / CCUG 30454 / Houston 1) (Rochalimaea henselae).